Reading from the N-terminus, the 431-residue chain is Enolase (431 aa).

Position 166 (Gln166) interacts with (2R)-2-phosphoglycerate. Glu208 serves as the catalytic Proton donor. Asp245, Glu288, and Asp315 together coordinate Mg(2+). Lys340, Arg369, Ser370, and Lys391 together coordinate (2R)-2-phosphoglycerate. Catalysis depends on Lys340, which acts as the Proton acceptor.

Belongs to the enolase family. Requires Mg(2+) as cofactor.

The protein resides in the cytoplasm. It is found in the secreted. Its subcellular location is the cell surface. It catalyses the reaction (2R)-2-phosphoglycerate = phosphoenolpyruvate + H2O. It functions in the pathway carbohydrate degradation; glycolysis; pyruvate from D-glyceraldehyde 3-phosphate: step 4/5. Functionally, catalyzes the reversible conversion of 2-phosphoglycerate (2-PG) into phosphoenolpyruvate (PEP). It is essential for the degradation of carbohydrates via glycolysis. The sequence is that of Enolase from Clostridium botulinum (strain Loch Maree / Type A3).